The sequence spans 864 residues: Leucine--tRNA ligase (864 aa).

Positions 57–67 (PYPSGNLHMGH) match the 'HIGH' region motif. Positions 628 to 632 (KMSKS) match the 'KMSKS' region motif. Lysine 631 provides a ligand contact to ATP.

It belongs to the class-I aminoacyl-tRNA synthetase family.

The protein localises to the cytoplasm. The enzyme catalyses tRNA(Leu) + L-leucine + ATP = L-leucyl-tRNA(Leu) + AMP + diphosphate. The protein is Leucine--tRNA ligase of Prochlorococcus marinus (strain MIT 9515).